We begin with the raw amino-acid sequence, 633 residues long: Threonine--tRNA ligase (633 aa).

A TGS domain is found at 1–61; that stretch reads MINVYFSDNS…TEDCKFEVIT (61 aa). A catalytic region spans residues 242-533; it reads DHRKIGKELE…LIEHHSGKLP (292 aa). Zn(2+)-binding residues include Cys-333, His-384, and His-510.

Belongs to the class-II aminoacyl-tRNA synthetase family. In terms of assembly, homodimer. The cofactor is Zn(2+).

The protein resides in the cytoplasm. The enzyme catalyses tRNA(Thr) + L-threonine + ATP = L-threonyl-tRNA(Thr) + AMP + diphosphate + H(+). Functionally, catalyzes the attachment of threonine to tRNA(Thr) in a two-step reaction: L-threonine is first activated by ATP to form Thr-AMP and then transferred to the acceptor end of tRNA(Thr). Also edits incorrectly charged L-seryl-tRNA(Thr). This is Threonine--tRNA ligase from Ehrlichia ruminantium (strain Welgevonden).